The primary structure comprises 191 residues: MKLLWTSQHIKVTVHIDGKVSKMDVLEAIKTRRSIRKYQDREVPEELIDKILDAAMCGPSAVDERPWHFIVVRNREMLEKIPEVHPYGAMVKDAPVAIIVCCDSSLEKIPGFWVQDCSIASQNILLAAHSLGLGAVWTGVYPLEDRVEGIRRLFSIPEHVIPFSVIPLGYPAENPGTRDLFDPDRIHLEKW.

Residue 127-132 coordinates NAD(+); the sequence is AAHSLG.

This sequence belongs to the nitroreductase family. It depends on FMN as a cofactor.

This chain is Putative NADH dehydrogenase/NAD(P)H nitroreductase, found in Methanothermobacter thermautotrophicus (strain ATCC 29096 / DSM 1053 / JCM 10044 / NBRC 100330 / Delta H) (Methanobacterium thermoautotrophicum).